The following is a 118-amino-acid chain: Superoxide-generating NADPH oxidase light chain subunit (118 aa).

The next 4 helical transmembrane spans lie at 9–29 (WAAM…IMGI), 36–56 (IAIY…PLSF), 62–82 (AIFH…VLCY), and 83–103 (FLVP…VFLI).

It belongs to the p22phox family. In terms of assembly, composed of a heavy chain and a light chain.

It localises to the cell membrane. Its function is as follows. Critical component of the membrane-bound oxidase of phagocytes that generates superoxide. This is Superoxide-generating NADPH oxidase light chain subunit (cybA) from Dictyostelium discoideum (Social amoeba).